Consider the following 162-residue polypeptide: Nucleotide-binding protein Francci3_0558 (162 aa).

Belongs to the YajQ family.

Its function is as follows. Nucleotide-binding protein. The polypeptide is Nucleotide-binding protein Francci3_0558 (Frankia casuarinae (strain DSM 45818 / CECT 9043 / HFP020203 / CcI3)).